Consider the following 334-residue polypeptide: Biotin synthase (334 aa).

Residues 55 to 285 (GEGGGVHACS…AHPSKIIKFA (231 aa)) enclose the Radical SAM core domain. [4Fe-4S] cluster is bound by residues Cys-73, Cys-77, and Cys-80. [2Fe-2S] cluster is bound by residues Cys-152, Cys-213, and Lys-283.

The protein belongs to the radical SAM superfamily. Biotin synthase family. In terms of assembly, homodimer. [4Fe-4S] cluster is required as a cofactor. It depends on [2Fe-2S] cluster as a cofactor.

It catalyses the reaction (4R,5S)-dethiobiotin + (sulfur carrier)-SH + 2 reduced [2Fe-2S]-[ferredoxin] + 2 S-adenosyl-L-methionine = (sulfur carrier)-H + biotin + 2 5'-deoxyadenosine + 2 L-methionine + 2 oxidized [2Fe-2S]-[ferredoxin]. The protein operates within cofactor biosynthesis; biotin biosynthesis; biotin from 7,8-diaminononanoate: step 2/2. In terms of biological role, catalyzes the conversion of dethiobiotin (DTB) to biotin by the insertion of a sulfur atom into dethiobiotin via a radical-based mechanism. This Chlorobaculum parvum (strain DSM 263 / NCIMB 8327) (Chlorobium vibrioforme subsp. thiosulfatophilum) protein is Biotin synthase.